Consider the following 340-residue polypeptide: Adenosine kinase (340 aa).

Residue D293 is part of the active site.

This sequence belongs to the carbohydrate kinase PfkB family. Mg(2+) serves as cofactor.

It catalyses the reaction adenosine + ATP = AMP + ADP + H(+). Its pathway is purine metabolism; AMP biosynthesis via salvage pathway; AMP from adenosine: step 1/1. Its function is as follows. ATP dependent phosphorylation of adenosine and other related nucleoside analogs to monophosphate derivatives. ADO1 does not play a major role in adenine utilization in yeast. Its physiological role could primarily be to recycle adenosine produced by the methyl cycle. The chain is Adenosine kinase from Saccharomyces cerevisiae (strain ATCC 204508 / S288c) (Baker's yeast).